The sequence spans 571 residues: Urease subunit alpha (571 aa).

A Urease domain is found at 133–571 (GGIDTHVHFI…LPLTQRYFLF (439 aa)). Ni(2+)-binding residues include histidine 138, histidine 140, and lysine 221. Lysine 221 carries the post-translational modification N6-carboxylysine. Histidine 223 contributes to the substrate binding site. Ni(2+)-binding residues include histidine 250 and histidine 276. Histidine 324 serves as the catalytic Proton donor. Aspartate 364 contributes to the Ni(2+) binding site.

It belongs to the metallo-dependent hydrolases superfamily. Urease alpha subunit family. In terms of assembly, heterotrimer of UreA (gamma), UreB (beta) and UreC (alpha) subunits. Three heterotrimers associate to form the active enzyme. Ni cation serves as cofactor. Post-translationally, carboxylation allows a single lysine to coordinate two nickel ions.

The protein resides in the cytoplasm. The enzyme catalyses urea + 2 H2O + H(+) = hydrogencarbonate + 2 NH4(+). It participates in nitrogen metabolism; urea degradation; CO(2) and NH(3) from urea (urease route): step 1/1. The chain is Urease subunit alpha from Staphylococcus epidermidis (strain ATCC 35984 / DSM 28319 / BCRC 17069 / CCUG 31568 / BM 3577 / RP62A).